Consider the following 293-residue polypeptide: Probable metal transport system membrane protein TC_0698 (293 aa).

7 helical membrane passes run 18-38 (SLLAAFGASIAGGIVGSYIVV), 41-61 (IVSISGSIAHSILGGVGIALW), 68-88 (LPISPLHGAIASAIFVAICIG), 101-121 (IISMIWSIGMAVGMLCISKLP), 142-162 (DLYFLGILDLLIVATVSICHT), 186-206 (FLLLILTAITTVVLMYVMGVI), and 242-262 (FLGIILAYILDLPVGPIIAIL).

The protein belongs to the ABC-3 integral membrane protein family.

The protein resides in the cell inner membrane. Its function is as follows. Part of an ATP-driven transport system TC_0696/TC_0697/TC_0698 for a metal. The sequence is that of Probable metal transport system membrane protein TC_0698 from Chlamydia muridarum (strain MoPn / Nigg).